The following is an 846-amino-acid chain: uncharacterized protein (846 aa).

Disordered stretches follow at residues 159–217, 254–276, 332–414, 459–501, 556–651, and 803–846; these read VPTF…INHI, CNLN…SNSN, NKLN…PLSI, GSSI…SNSL, QQQQ…NFND, and TTTT…NKNK. Over residues 163 to 217 the composition is skewed to low complexity; the sequence is HNQNQNNNNQNNNQNNNNNNNNNNNNNNNNNNNNNNNSQNNNNNQNNNNNHINHI. Positions 355 to 414 are enriched in low complexity; sequence LQSPNSQSLANSSANISSNALNQSSSSQQQQPQSTSQQQQQQHKMNSSSGNISPPLPLSI. The segment covering 459 to 482 has biased composition (polar residues); the sequence is GSSITPKNLSPLSSSAPNTPKQFA. 3 stretches are compositionally biased toward low complexity: residues 483 to 501, 568 to 642, and 811 to 846; these read SLSS…SNSL, QQQQ…QPNN, and NNNN…NKNK.

This is an uncharacterized protein from Dictyostelium discoideum (Social amoeba).